A 128-amino-acid polypeptide reads, in one-letter code: C-C motif chemokine 28 (128 aa).

Positions 1–24 are cleaved as a signal peptide; it reads MQQTGLTLALVALAVCVALPSSEA. 2 disulfides stabilise this stretch: Cys-32-Cys-60 and Cys-33-Cys-75. The segment at 89-128 is disordered; that stretch reads EQAAKKNTKGNICHKKQAGKRKSKGAHQEKPEIHSHKSPY. Residues 94–113 are compositionally biased toward basic residues; it reads KNTKGNICHKKQAGKRKSKG. Positions 114–128 are enriched in basic and acidic residues; it reads AHQEKPEIHSHKSPY.

It belongs to the intercrine beta (chemokine CC) family.

It is found in the secreted. Functionally, chemotactic activity for resting CD4, CD8 T-cells and eosinophils. Binds to CCR3 and CCR10 and induces calcium mobilization in a dose-dependent manner. The polypeptide is C-C motif chemokine 28 (CCL28) (Canis lupus familiaris (Dog)).